We begin with the raw amino-acid sequence, 846 residues long: Enhancer of polycomb-like protein 1 (846 aa).

5 disordered regions span residues 169-204, 391-466, 587-607, 682-702, and 759-804; these read FNSK…KGDA, TSDE…APDA, EKKR…QSPK, AADA…PQPN, and QVQA…GVKQ. Residues 180-203 show a composition bias toward basic and acidic residues; it reads VKSDKEQGRGMRVKGKDREKEKGD. Over residues 411 to 426 the composition is skewed to polar residues; sequence PSLSGQTPLTSGQSSS. The span at 432–452 shows a compositional bias: basic and acidic residues; sequence TDKDREERAQRERYDAQRNAE. Positions 434 to 490 form a coiled coil; the sequence is KDREERAQRERYDAQRNAERSGILSGRSNAPDALKERLQALQQKTEEMLARKKEQDA. Residues 686–702 are compositionally biased toward pro residues; that stretch reads KPPPAPIFQKPPAPQPN. The span at 759–773 shows a compositional bias: low complexity; that stretch reads QVQAQGQGHPQAHLQ. Residues 783-796 are compositionally biased toward polar residues; the sequence is NGVNSPMPNGQQML.

This sequence belongs to the enhancer of polycomb family. Component of the NuA4 histone acetyltransferase complex.

Its subcellular location is the nucleus. Functionally, component of the NuA4 histone acetyltransferase complex which is involved in transcriptional activation of selected genes principally by acetylation of nucleosomal histone H4 and H2A. The NuA4 complex is also involved in DNA repair. Involved in gene silencing by neighboring heterochromatin, blockage of the silencing spreading along the chromosome, and required for cell cycle progression through G2/M. This Cryptococcus neoformans var. neoformans serotype D (strain JEC21 / ATCC MYA-565) (Filobasidiella neoformans) protein is Enhancer of polycomb-like protein 1 (EPL1).